A 59-amino-acid chain; its full sequence is MAKTIKVTQTKSAIGRLPKHKATLTGLGLRRIGHTVELEDTPAVRGMINKVYYMVKVED.

It belongs to the universal ribosomal protein uL30 family. As to quaternary structure, part of the 50S ribosomal subunit.

The sequence is that of Large ribosomal subunit protein uL30 from Shewanella amazonensis (strain ATCC BAA-1098 / SB2B).